Consider the following 257-residue polypeptide: Acetylglutamate kinase (257 aa).

Substrate-binding positions include 43-44, arginine 65, and asparagine 157; that span reads GG. ATP contacts are provided by residues 180 to 185 and 208 to 210; these read DISSIL and IIT.

Belongs to the acetylglutamate kinase family. ArgB subfamily. Homodimer.

The protein resides in the cytoplasm. The enzyme catalyses N-acetyl-L-glutamate + ATP = N-acetyl-L-glutamyl 5-phosphate + ADP. The protein operates within amino-acid biosynthesis; L-arginine biosynthesis; N(2)-acetyl-L-ornithine from L-glutamate: step 2/4. Its function is as follows. Catalyzes the ATP-dependent phosphorylation of N-acetyl-L-glutamate. In Buchnera aphidicola subsp. Acyrthosiphon pisum (strain Tuc7), this protein is Acetylglutamate kinase.